The primary structure comprises 283 residues: 4-diphosphocytidyl-2-C-methyl-D-erythritol kinase (283 aa).

Residue K12 is part of the active site. Position 99-109 (99-109 (PLAAGIGGGSA)) interacts with ATP. D141 is a catalytic residue.

It belongs to the GHMP kinase family. IspE subfamily.

The catalysed reaction is 4-CDP-2-C-methyl-D-erythritol + ATP = 4-CDP-2-C-methyl-D-erythritol 2-phosphate + ADP + H(+). It functions in the pathway isoprenoid biosynthesis; isopentenyl diphosphate biosynthesis via DXP pathway; isopentenyl diphosphate from 1-deoxy-D-xylulose 5-phosphate: step 3/6. In terms of biological role, catalyzes the phosphorylation of the position 2 hydroxy group of 4-diphosphocytidyl-2C-methyl-D-erythritol. The polypeptide is 4-diphosphocytidyl-2-C-methyl-D-erythritol kinase (Sphingopyxis alaskensis (strain DSM 13593 / LMG 18877 / RB2256) (Sphingomonas alaskensis)).